A 491-amino-acid chain; its full sequence is Protein nucleotidyltransferase YdiU (491 aa).

G88, G90, R91, K111, D123, G124, R174, and R181 together coordinate ATP. The Proton acceptor role is filled by D250. N251 and D260 together coordinate Mg(2+). D260 contacts ATP.

The protein belongs to the SELO family. The cofactor is Mg(2+). Mn(2+) serves as cofactor.

It catalyses the reaction L-seryl-[protein] + ATP = 3-O-(5'-adenylyl)-L-seryl-[protein] + diphosphate. The catalysed reaction is L-threonyl-[protein] + ATP = 3-O-(5'-adenylyl)-L-threonyl-[protein] + diphosphate. It carries out the reaction L-tyrosyl-[protein] + ATP = O-(5'-adenylyl)-L-tyrosyl-[protein] + diphosphate. The enzyme catalyses L-histidyl-[protein] + UTP = N(tele)-(5'-uridylyl)-L-histidyl-[protein] + diphosphate. It catalyses the reaction L-seryl-[protein] + UTP = O-(5'-uridylyl)-L-seryl-[protein] + diphosphate. The catalysed reaction is L-tyrosyl-[protein] + UTP = O-(5'-uridylyl)-L-tyrosyl-[protein] + diphosphate. In terms of biological role, nucleotidyltransferase involved in the post-translational modification of proteins. It can catalyze the addition of adenosine monophosphate (AMP) or uridine monophosphate (UMP) to a protein, resulting in modifications known as AMPylation and UMPylation. The protein is Protein nucleotidyltransferase YdiU of Bradyrhizobium sp. (strain BTAi1 / ATCC BAA-1182).